The sequence spans 333 residues: cGAMP-activated phospholipase (333 aa).

The 182-residue stretch at 10–191 folds into the PNPLA domain; that stretch reads LALSGGGYRG…VGNAPGLFGL (182 aa). The GXGXXG motif lies at 14–19; the sequence is GGGYRG. The GXSXG signature appears at 46-50; the sequence is GTSAG. The active-site Nucleophile is S48. Catalysis depends on D178, which acts as the Proton acceptor. Residues 178-180 carry the DGA/G motif; the sequence is DGG.

The protein belongs to the patatin family.

It carries out the reaction a 1,2-diacyl-sn-glycero-3-phosphocholine + H2O = a 2-acyl-sn-glycero-3-phosphocholine + a fatty acid + H(+). The enzyme catalyses 1,2-di-(9Z-octadecenoyl)-sn-glycero-3-phosphoethanolamine + 2 H2O = sn-glycero-3-phosphoethanolamine + 2 (9Z)-octadecenoate + 2 H(+). Its activity is regulated as follows. Phospholipase activity is specifically activated upon cGAMP binding, which is produced by the cognate cyclic nucleotide synthase encoded in the same operon. Is not activated by cyclic dinucleotides 2',3'-cGAMP, c-diAMP or 3',3'-c-diGMP. Functionally, effector phospholipase of a CBASS antiviral system. CBASS (cyclic oligonucleotide-based antiphage signaling system) provides immunity against bacteriophages. The CD-NTase protein (CdnA) synthesizes cyclic nucleotides in response to infection; these serve as specific second messenger signals. The signals activate a diverse range of effectors, leading to bacterial cell death and thus abortive phage infection. A type II-A(GA) CBASS system. In terms of biological role, phospholipase that is activated upon binding to the cyclic dinucleotide (CDN) second messenger 3',3'-cyclic GMP-AMP (cGAMP). Degrades phospholipids in the cell membrane. The capV-cdnA-cap2-cap3 operon provides about 10(4)-fold protection in strain BWHPSA011 against infection by phage PaMx41. In P.aeruginosa strain PAO1 it confers protection against phages PaMx41 and JBD18 but not JBD67 (JBD18 and JBD67 do not replicate in BWHPSA011 / Pa011). When acb2 in JBD67 is deleted this CBASS operon then protects against JDB67 also. This CBASS system limits prophage induction of lysogenized JBD67 as well as viral lytic replication. The protein is cGAMP-activated phospholipase of Pseudomonas aeruginosa (strain BWHPSA011 / Pa011).